The primary structure comprises 532 residues: Invertase 2 (532 aa).

An N-terminal signal peptide occupies residues 1–19 (MLLQAFLFLLAGFAAKISA). Residue asparagine 23 is glycosylated (N-linked (GlcNAc...) asparagine). Substrate is bound by residues 39-42 (WMND) and glutamine 60. Aspartate 42 is an active-site residue. N-linked (GlcNAc...) asparagine; partial glycosylation occurs at asparagine 64. Residue asparagine 97 is glycosylated (N-linked (GlcNAc...) asparagine). 102-103 (FS) is a substrate binding site. 2 N-linked (GlcNAc...) asparagine glycosylation sites follow: asparagine 111 and asparagine 118. A glycan (N-linked (GlcNAc...) asparagine; partial) is linked at asparagine 165. Substrate-binding positions include 170–171 (RD) and glutamate 223. Residues asparagine 266 and asparagine 275 are each glycosylated (N-linked (GlcNAc...) asparagine; partial). Tryptophan 311 is a substrate binding site. Residues asparagine 356, asparagine 369, asparagine 384, and asparagine 398 are each glycosylated (N-linked (GlcNAc...) asparagine). A glycan (N-linked (GlcNAc...) asparagine; partial) is linked at asparagine 512.

This sequence belongs to the glycosyl hydrolase 32 family. Post-translationally, isoform Secreted is glycosylated. Isoform Intracellular is not glycosylated.

Its subcellular location is the cytoplasm. It localises to the secreted. The catalysed reaction is Hydrolysis of terminal non-reducing beta-D-fructofuranoside residues in beta-D-fructofuranosides.. This Saccharomyces cerevisiae (strain ATCC 204508 / S288c) (Baker's yeast) protein is Invertase 2 (SUC2).